A 334-amino-acid chain; its full sequence is MSEFLTPERTVYDSGVQFLRPKSLDEFIGQENVKKKLSLALEAAKMRGEVLDHVLLAGPPGLGKTTLAHIIASELQTNIHVTSGPVLVKQGDMAAILTSLERGDVLFIDEIHRLNKAVEELLYSAIEDFQIDIMIGKGPSAKSIRIDIQPFTLVGATTRSGLLSSPLRSRFGIILELDFYTVKELKEIIKRAASLMDVEIEDAAAEMIAKRSRGTPRIAIRLTKRVRDMLTVVKADRINTDIVLKTMEVLNIDDEGLDEFDRKILKTIIEIYRGGPVGLNALAASLGVEADTLSEVYEPYLLQAGFLARTPRGRIVTEKAYKHLKYEVPENRLF.

A large ATPase domain (RuvB-L) region spans residues 1-181; sequence MSEFLTPERT…GIILELDFYT (181 aa). Leu19 and Arg20 together coordinate ADP. Glu26, Phe27, and Ile28 together coordinate ATP. Residues Phe27, Ile28, Gly61, Leu62, Gly63, Lys64, Thr65, and Thr66 each coordinate ADP. 2 residues coordinate ATP: Leu62 and Gly63. ATP is bound by residues 127 to 129 and Arg170; that span reads EDF. ADP-binding residues include Tyr180, Pro216, and Arg217. Residues 182–255 are small ATPAse domain (RuvB-S); it reads VKELKEIIKR…TMEVLNIDDE (74 aa). Pro216 lines the ATP pocket. Residues 256–334 are head domain (RuvB-H); that stretch reads GLDEFDRKIL…KYEVPENRLF (79 aa). DNA-binding residues include Arg309 and Arg314.

The protein belongs to the RuvB family. In terms of assembly, homohexamer. Forms an RuvA(8)-RuvB(12)-Holliday junction (HJ) complex. HJ DNA is sandwiched between 2 RuvA tetramers; dsDNA enters through RuvA and exits via RuvB. An RuvB hexamer assembles on each DNA strand where it exits the tetramer. Each RuvB hexamer is contacted by two RuvA subunits (via domain III) on 2 adjacent RuvB subunits; this complex drives branch migration. In the full resolvosome a probable DNA-RuvA(4)-RuvB(12)-RuvC(2) complex forms which resolves the HJ.

It is found in the cytoplasm. The enzyme catalyses ATP + H2O = ADP + phosphate + H(+). Its function is as follows. The RuvA-RuvB-RuvC complex processes Holliday junction (HJ) DNA during genetic recombination and DNA repair, while the RuvA-RuvB complex plays an important role in the rescue of blocked DNA replication forks via replication fork reversal (RFR). RuvA specifically binds to HJ cruciform DNA, conferring on it an open structure. The RuvB hexamer acts as an ATP-dependent pump, pulling dsDNA into and through the RuvAB complex. RuvB forms 2 homohexamers on either side of HJ DNA bound by 1 or 2 RuvA tetramers; 4 subunits per hexamer contact DNA at a time. Coordinated motions by a converter formed by DNA-disengaged RuvB subunits stimulates ATP hydrolysis and nucleotide exchange. Immobilization of the converter enables RuvB to convert the ATP-contained energy into a lever motion, pulling 2 nucleotides of DNA out of the RuvA tetramer per ATP hydrolyzed, thus driving DNA branch migration. The RuvB motors rotate together with the DNA substrate, which together with the progressing nucleotide cycle form the mechanistic basis for DNA recombination by continuous HJ branch migration. Branch migration allows RuvC to scan DNA until it finds its consensus sequence, where it cleaves and resolves cruciform DNA. Promotes Holliday junction (HJ) branch migration in conjunction with RuvA. Subunits can be free, ADP- or ATP-bound; nucleotide binding changes during the reaction cycle. Has a DNA-dependent ATPase activity; dsDNA and supercoiled DNA but not ssDNA stimulate activity. The chain is Holliday junction branch migration complex subunit RuvB from Thermotoga maritima (strain ATCC 43589 / DSM 3109 / JCM 10099 / NBRC 100826 / MSB8).